We begin with the raw amino-acid sequence, 104 residues long: Large ribosomal subunit protein uL24 (104 aa).

This sequence belongs to the universal ribosomal protein uL24 family. Part of the 50S ribosomal subunit.

One of two assembly initiator proteins, it binds directly to the 5'-end of the 23S rRNA, where it nucleates assembly of the 50S subunit. In terms of biological role, one of the proteins that surrounds the polypeptide exit tunnel on the outside of the subunit. The protein is Large ribosomal subunit protein uL24 of Clostridium beijerinckii (strain ATCC 51743 / NCIMB 8052) (Clostridium acetobutylicum).